Consider the following 328-residue polypeptide: Gonadotropin-releasing hormone receptor (328 aa).

Topologically, residues 1–38 (MQDDTSSEQNPTHCSAINSSVPLVQGALPTLTLSGKIR) are extracellular. N18 is a glycosylation site (N-linked (GlcNAc...) asparagine). Residues 39–59 (VTVTFFLFLVSTTLNASFLLK) traverse the membrane as a helical segment. The Cytoplasmic segment spans residues 60–84 (LQKWTQKKEKGKKLSRMKVLLKHLT). A helical transmembrane segment spans residues 85-105 (LANLLETLIVMPLDGMWNITV). The Extracellular segment spans residues 106–115 (QWYAGELLCK). A disulfide bridge connects residues C114 and C196. The helical transmembrane segment at 116 to 136 (ILSYLKLFSMYAPAFMMVVIS) threads the bilayer. Residues 137 to 160 (LDRSMAITRPLPVQSNRKLEQSMT) are Cytoplasmic-facing. Residues 161-181 (GLAWGLSSVLAGPQLYIFKMI) form a helical membrane-spanning segment. Residues 182–208 (HLENGPGQTEVFSQCVTHCSFPQWWHQ) lie on the Extracellular side of the membrane. The helical transmembrane segment at 209-229 (AFYNFFTFICLFIIPLLIMLI) threads the bilayer. The Cytoplasmic segment spans residues 230-271 (CNAKIIFTLTQVLQQDSNKLQLNQSKNNIPRARLRTLKMTVA). Residues 272–292 (FAASFIVCWTPYYVLGLWYWF) traverse the membrane as a helical segment. Over 293–306 (DPGMLHRMSEPVNH) the chain is Extracellular. Residues 307 to 327 (FFFLFAFLNPCFDPLIYGYFS) traverse the membrane as a helical segment. Position 328 (L328) is a topological domain, cytoplasmic.

The protein belongs to the G-protein coupled receptor 1 family.

It localises to the cell membrane. Its function is as follows. Receptor for gonadotropin releasing hormone (GnRH) that mediates the action of GnRH to stimulate the secretion of the gonadotropic hormones luteinizing hormone (LH) and follicle-stimulating hormone (FSH). This receptor mediates its action by association with G-proteins that activate a phosphatidylinositol-calcium second messenger system. In Cavia porcellus (Guinea pig), this protein is Gonadotropin-releasing hormone receptor (GNRHR).